The sequence spans 398 residues: Phosphoglycerate kinase (398 aa).

Substrate-binding positions include 21–23 (DFN), Arg-36, 59–62 (HLGR), Arg-119, and Arg-157. ATP-binding positions include Lys-208, Gly-296, Glu-327, and 354 to 357 (GGDS).

It belongs to the phosphoglycerate kinase family. Monomer.

The protein localises to the cytoplasm. The catalysed reaction is (2R)-3-phosphoglycerate + ATP = (2R)-3-phospho-glyceroyl phosphate + ADP. Its pathway is carbohydrate degradation; glycolysis; pyruvate from D-glyceraldehyde 3-phosphate: step 2/5. This chain is Phosphoglycerate kinase, found in Streptococcus pneumoniae serotype 19F (strain G54).